The sequence spans 160 residues: Ureidoglycolate lyase (160 aa).

It belongs to the ureidoglycolate lyase family. Homodimer. Ni(2+) serves as cofactor.

It catalyses the reaction (S)-ureidoglycolate = urea + glyoxylate. It functions in the pathway nitrogen metabolism; (S)-allantoin degradation. Functionally, catalyzes the catabolism of the allantoin degradation intermediate (S)-ureidoglycolate, generating urea and glyoxylate. Involved in the anaerobic utilization of allantoin as sole nitrogen source. Reinforces the induction of genes involved in the degradation of allantoin and glyoxylate by producing glyoxylate. The polypeptide is Ureidoglycolate lyase (Escherichia coli (strain K12 / MC4100 / BW2952)).